A 1290-amino-acid chain; its full sequence is Sorbin and SH3 domain-containing protein 1 (1290 aa).

Disordered stretches follow at residues 1–211 (MSSE…LSDV), 238–271 (HKLNRDDDSDVHSPRYSFSDDTKSPLSVPRSKSE), and 286–313 (TLPLPARSSSLKSSPERNDWEPLDKKVD). Over residues 45-61 (SSSYRGTPSSSPVSPQE) the composition is skewed to low complexity. Threonine 51 bears the Phosphothreonine mark. Phosphoserine is present on residues serine 55, serine 58, and serine 62. A compositionally biased stretch (basic and acidic residues) spans 62 to 71 (SPKHESKSGL). Composition is skewed to polar residues over residues 83-95 (LSSSADTNGNAQP) and 123-153 (EVSSSHIETDSQDFPPTSRPSSAYPSTTIVN). Positions 161–173 (HNRDPASERRAGE) are enriched in basic and acidic residues. A phosphoserine mark is found at aspartate 164 and aspartate 175. Threonine 179 carries the post-translational modification Phosphothreonine. Phosphoserine is present on residues serine 185, alanine 194, serine 204, serine 209, serine 254, serine 261, serine 270, and proline 288. The segment covering 189–199 (ASERRAKDASR) has biased composition (basic and acidic residues). One can recognise a SoHo domain in the interval 202–247 (VRSAQDLSDVSTDEVGIPLRNTERSKDWYKTMFKQIHKLNRDDDSD). Over residues 240 to 260 (LNRDDDSDVHSPRYSFSDDTK) the composition is skewed to basic and acidic residues. Over residues 299–313 (SPERNDWEPLDKKVD) the composition is skewed to basic and acidic residues. Position 325 is a phosphotyrosine; by ABL1 (tyrosine 325). Phosphoserine is present on residues serine 345, proline 346, tyrosine 357, serine 376, and serine 407. A disordered region spans residues 389-416 (VETVNKSPSANSPQSSAVSPTPDITSEP). Polar residues predominate over residues 392 to 412 (VNKSPSANSPQSSAVSPTPDI). Tyrosine 421 carries the post-translational modification Phosphotyrosine; by ABL1. A phosphoserine mark is found at serine 432 and serine 470. 6 disordered regions span residues 463-482 (LSGLKRPSSSASTKVDRKGG), 588-607 (YDSKSSSTMSLQEYGTSSRR), 697-739 (SLDF…EMDG), 783-803 (VSNDSREGSGGSVHGDFPKHR), 822-841 (RKHEQQSSRQSDWRSDSRGD), and 862-972 (PLQQ…SPRH). Position 475 is a phosphothreonine (threonine 475). Polar residues-rich tracts occupy residues 595–606 (TMSLQEYGTSSR) and 704–722 (LSKSPTPVLSRSGLTSARS). A Phosphoserine modification is found at serine 969. 2 consecutive SH3 domains span residues 1049-1108 (LEMR…LLPP) and 1123-1184 (LEYG…VLKR). Threonine 1189 bears the Phosphothreonine mark. Residues tyrosine 1193 and tyrosine 1198 each carry the phosphotyrosine modification. Residues 1198–1210 (YSSSPSRSATVSP) are compositionally biased toward low complexity. Residues 1198-1227 (YSSSPSRSATVSPQQPQAQQRRVTPDRSQP) form a disordered region. A phosphoserine mark is found at serine 1201 and serine 1209. The segment covering 1211 to 1227 (QQPQAQQRRVTPDRSQP) has biased composition (polar residues). The region spanning 1229–1290 (LDLCSYQALY…PGNYVKPLYL (62 aa)) is the SH3 3 domain. At tyrosine 1238 the chain carries Phosphotyrosine; by ABL1.

As to quaternary structure, interacts (via SH3 domain 2) with PXN. Interacts with the long isoform of AFDN and with VCL. AFDN and VCL bind to SORBS1 in a competitive manner and do not form a ternary complex. Interacts with ABL1, CBL, CBLB and INPPL1/SHIP2 through the third SH3 domain. Interaction with ABL1 occurs only after insulin stimulation while this has no effect on the interaction with INPPL1. Interacts with the insulin receptor but dissociates from it following insulin stimulation. Also interacts with SCA7, PTK2/FAK1 and flotillin. Interacts (via third SH3 domain) with the Ten-1 ICD form of TENM1; the interaction induces the translocation of SORBS1 to the nucleus. Interacts with INSM1. Post-translationally, O-glycosylated. Expressed in all tissues tested: heart, brain, spleen, lung, liver, muscle, kidney and testis. Expressed in 3T3-L1 adipocytes but not in 3T3-L1 fibroblasts.

The protein localises to the cell junction. It localises to the adherens junction. Its subcellular location is the cell membrane. It is found in the cytoplasm. The protein resides in the cytoskeleton. The protein localises to the focal adhesion. It localises to the nucleus. Its subcellular location is the nucleus matrix. Plays a role in tyrosine phosphorylation of CBL by linking CBL to the insulin receptor. Required for insulin-stimulated glucose transport. Involved in formation of actin stress fibers and focal adhesions. In Mus musculus (Mouse), this protein is Sorbin and SH3 domain-containing protein 1.